Consider the following 485-residue polypeptide: Glutamate--tRNA ligase (485 aa).

The 'HIGH' region signature appears at 11-21 (PSPTGHLHIGN). Residues 252 to 256 (KLSKR) carry the 'KMSKS' region motif. Residue Lys-255 coordinates ATP.

Belongs to the class-I aminoacyl-tRNA synthetase family. Glutamate--tRNA ligase type 1 subfamily. Monomer.

The protein localises to the cytoplasm. The catalysed reaction is tRNA(Glu) + L-glutamate + ATP = L-glutamyl-tRNA(Glu) + AMP + diphosphate. In terms of biological role, catalyzes the attachment of glutamate to tRNA(Glu) in a two-step reaction: glutamate is first activated by ATP to form Glu-AMP and then transferred to the acceptor end of tRNA(Glu). In Bacillus thuringiensis (strain Al Hakam), this protein is Glutamate--tRNA ligase.